The following is a 183-amino-acid chain: Potassium-transporting ATPase KdpC subunit (183 aa).

A helical transmembrane segment spans residues 10–30 (ASLLVLSLVTGVAYPLLVTGI).

The protein belongs to the KdpC family. In terms of assembly, the system is composed of three essential subunits: KdpA, KdpB and KdpC.

It is found in the cell inner membrane. In terms of biological role, part of the high-affinity ATP-driven potassium transport (or Kdp) system, which catalyzes the hydrolysis of ATP coupled with the electrogenic transport of potassium into the cytoplasm. This subunit acts as a catalytic chaperone that increases the ATP-binding affinity of the ATP-hydrolyzing subunit KdpB by the formation of a transient KdpB/KdpC/ATP ternary complex. This Pseudomonas aeruginosa (strain ATCC 15692 / DSM 22644 / CIP 104116 / JCM 14847 / LMG 12228 / 1C / PRS 101 / PAO1) protein is Potassium-transporting ATPase KdpC subunit.